The primary structure comprises 1212 residues: MFSLLGHAVNYGSHRTRRSFSRIKEVLKLPNLTDVQTQSYKWFLNEGIREMFDDIMPISDFSGKLSLEFVDYKLLKPKYTLEEARDHDANYSAPLHVTLKLTNHETGEIKTQDVFFGEFPLMTDSGTFVINGAERIIVSQLVRSPGVYYHSDFDKNGRQIFGATVIPNRGAWLEYETDAKDLAYVRIDRTRKLPLTVLIRALGFGSDSEVADMFGESDSLRFTLEKDIHKNPADSRVAEALKDIYERLRPGEPKTTDSSRSLLYARFFDPRRYDLAPVGRYKINKKLSLKNRLLRQTLAETLADPDTGEIIAKKGDVVTHEILDKLSPYLDRDDFKMVTYEPSKEGVLPDPVTVQEIKVYSKVDPERVIKLMSNGHIADDVKHLTPADVLASINYFFNLQDNIGTTDDIDHLGNRRIRRVGELLQNQFRIGLARMERVVRERMSIQDISTVTPQQLINIRPVVASVKEFFGSSQLSQFMDQNNPLGELTHKRRMSALGPGGLSRDRAGYEVRDVHYTHYGRLCPIETPEGPNIGLINSLATYAIVNKYGFIETPYRRVSWDTHKVTDKIDYLTADVEDNYIIAGANAPLNEDGSFKDKIVLARHKEDNLEVTPDKIDYMDVIPKQVVSVTSACIPFLENDDSNRALMGANHQRQAVPLINPHAPIVGTGMEYRAAHDSGDALVAKAPGVVEYVDANEIRIRRDDDTLDKYVLEKFRRSNATKNYNQTPAVKQGERVVADEVIADGPAMENGELALGQNPIIAFLTWNMYNYEDAVMISERMVKDDVYTSIHIEDYESEARDTKLGPEEITREIPNVGEDALKDLDEEGIVRIGAEVQDGDILVGKVTPKGVTELSAEERLLHAIFGEKAREVRDTSLRVPHGGGGIVQNVQVFTREAGDELPPGVNKMVRVYIVQKRKIQVGDKMSGRHGNKGTIALVCPEEDMPYLPDGRPVDICLNPMGVPSRMNIGQVLELHLGIAAKQLGIHVATPVFDGASEDDMWNMVREAGIGKDGKTVLYDGRTGEPFHNRVSVGIMYYLKLTHMVDDKIHARSIGPYSLVTQQPLGGKAQFGGQRFGEMEVWALEAYGAAYTLQEILTYKSDDVVGRVKAYEAIVKGERIPKPGVPESFRVLVKELQSLGLDIKVLDMDHKEIELRDMDDDSNDHFNIDTLSKLAEQQEKKKLAEEAAKKDDKSAEPVDQSDSSTSSDDKVSK.

Residues 1176–1195 (QQEKKKLAEEAAKKDDKSAE) are compositionally biased toward basic and acidic residues. The tract at residues 1176–1212 (QQEKKKLAEEAAKKDDKSAEPVDQSDSSTSSDDKVSK) is disordered.

The protein belongs to the RNA polymerase beta chain family. In terms of assembly, the RNAP catalytic core consists of 2 alpha, 1 beta, 1 beta' and 1 omega subunit. When a sigma factor is associated with the core the holoenzyme is formed, which can initiate transcription.

It carries out the reaction RNA(n) + a ribonucleoside 5'-triphosphate = RNA(n+1) + diphosphate. DNA-dependent RNA polymerase catalyzes the transcription of DNA into RNA using the four ribonucleoside triphosphates as substrates. This Lactobacillus gasseri (strain ATCC 33323 / DSM 20243 / BCRC 14619 / CIP 102991 / JCM 1131 / KCTC 3163 / NCIMB 11718 / NCTC 13722 / AM63) protein is DNA-directed RNA polymerase subunit beta.